Here is a 389-residue protein sequence, read N- to C-terminus: Innexin-6 (389 aa).

The next 4 helical transmembrane spans lie at 36–56 (VVIL…GDPI), 111–131 (VFAL…AMIA), 190–210 (LFYT…FYIL), and 276–296 (LFIF…VNCF).

This sequence belongs to the pannexin family.

Its subcellular location is the cell membrane. The protein localises to the cell junction. It localises to the gap junction. Functionally, structural component of the gap junctions. The polypeptide is Innexin-6 (inx-6) (Caenorhabditis elegans).